Consider the following 645-residue polypeptide: Acetyl-coenzyme A synthetase (645 aa).

Residues 190 to 193 (RGGK) and Thr308 each bind CoA. Residues 384-386 (GEP), 408-413 (DTWWQT), Asp497, and Arg512 each bind ATP. Ser520 lines the CoA pocket. Residue Arg523 participates in ATP binding. Val534, His536, and Ile539 together coordinate Mg(2+). Lys606 is modified (N6-acetyllysine).

It belongs to the ATP-dependent AMP-binding enzyme family. Requires Mg(2+) as cofactor. Acetylated. Deacetylation by the SIR2-homolog deacetylase activates the enzyme.

The catalysed reaction is acetate + ATP + CoA = acetyl-CoA + AMP + diphosphate. Its function is as follows. Catalyzes the conversion of acetate into acetyl-CoA (AcCoA), an essential intermediate at the junction of anabolic and catabolic pathways. AcsA undergoes a two-step reaction. In the first half reaction, AcsA combines acetate with ATP to form acetyl-adenylate (AcAMP) intermediate. In the second half reaction, it can then transfer the acetyl group from AcAMP to the sulfhydryl group of CoA, forming the product AcCoA. In Alcanivorax borkumensis (strain ATCC 700651 / DSM 11573 / NCIMB 13689 / SK2), this protein is Acetyl-coenzyme A synthetase.